The primary structure comprises 225 residues: MAGKLDRLQRSLGHRFDNPALLEQALTHRSFGQPNNERLEFLGDSILNCVVAIALFERFASLREGEMSRLRASLVCQDGLHRVALELDLGEYLRLGEGEMKSGGFRRPSILADALEAVFAATFLDQGFAAAKAVIDRLYDPMIAAIDPGVAAKDPKTALQELLQGRKLPLPTYVMAKVHGEAHAQEFEVVCEVNALNLRTTGRGTNRRAAEQQAAELALAQLRKP.

An RNase III domain is found at 5 to 127; sequence LDRLQRSLGH…VFAATFLDQG (123 aa). Glu-40 is a Mg(2+) binding site. The active site involves Asp-44. The Mg(2+) site is built by Asp-113 and Glu-116. Glu-116 is a catalytic residue. The DRBM domain occupies 154–224; it reads DPKTALQELL…AELALAQLRK (71 aa).

This sequence belongs to the ribonuclease III family. In terms of assembly, homodimer. It depends on Mg(2+) as a cofactor.

It localises to the cytoplasm. It catalyses the reaction Endonucleolytic cleavage to 5'-phosphomonoester.. Functionally, digests double-stranded RNA. Involved in the processing of primary rRNA transcript to yield the immediate precursors to the large and small rRNAs (23S and 16S). Processes some mRNAs, and tRNAs when they are encoded in the rRNA operon. Processes pre-crRNA and tracrRNA of type II CRISPR loci if present in the organism. This chain is Ribonuclease 3, found in Aromatoleum aromaticum (strain DSM 19018 / LMG 30748 / EbN1) (Azoarcus sp. (strain EbN1)).